The following is a 64-amino-acid chain: Prokaryotic ubiquitin-like protein Pup (64 aa).

Positions methionine 1–glycine 11 are enriched in basic and acidic residues. Residues methionine 1–threonine 36 form a disordered region. Residues glycine 21–tyrosine 58 are ARC ATPase binding. Residues alanine 24–glutamate 52 are a coiled coil. Residue glutamine 64 is modified to Deamidated glutamine. Glutamine 64 participates in a covalent cross-link: Isoglutamyl lysine isopeptide (Gln-Lys) (interchain with K-? in acceptor proteins).

It belongs to the prokaryotic ubiquitin-like protein family. In terms of assembly, strongly interacts with the proteasome-associated ATPase ARC through a hydrophobic interface; the interacting region of Pup lies in its C-terminal half. There is one Pup binding site per ARC hexamer ring. In terms of processing, is modified by deamidation of its C-terminal glutamine to glutamate by the deamidase Dop, a prerequisite to the subsequent pupylation process.

It participates in protein degradation; proteasomal Pup-dependent pathway. Its function is as follows. Protein modifier that is covalently attached to lysine residues of substrate proteins, thereby targeting them for proteasomal degradation. The tagging system is termed pupylation. This is Prokaryotic ubiquitin-like protein Pup from Mycobacteroides abscessus (strain ATCC 19977 / DSM 44196 / CCUG 20993 / CIP 104536 / JCM 13569 / NCTC 13031 / TMC 1543 / L948) (Mycobacterium abscessus).